We begin with the raw amino-acid sequence, 389 residues long: Probable nitrate transporter NarT (389 aa).

12 helical membrane passes run 14–34 (TLSL…MPFI), 45–65 (ISII…PFGY), 69–89 (IVGA…PIFF), 97–117 (GMLM…SVGV), 139–159 (GNIG…IIGW), 161–181 (TTVR…FIFG), 211–231 (WYFI…NYLV), 246–266 (GVFI…GDKF), 268–288 (AVKV…ILGI), 294–314 (LFTV…GLIF), 331–351 (IVSM…TYVA), and 353–373 (LTGS…IALF).

Belongs to the major facilitator superfamily. Nitrate/nitrite porter (TC 2.A.1.8) family.

It localises to the cell membrane. Functionally, probably required for nitrate uptake under anoxic conditions. Also possibly involved in excretion of nitrite produced by the dissimilatory reduction of nitrate. The sequence is that of Probable nitrate transporter NarT (narT) from Staphylococcus aureus (strain JH9).